We begin with the raw amino-acid sequence, 116 residues long: NADPH-dependent 7-cyano-7-deazaguanine reductase (116 aa).

Cysteine 31 (thioimide intermediate) is an active-site residue. Aspartate 38 (proton donor) is an active-site residue. Substrate is bound by residues 53–55 (VEL) and 72–73 (YE).

This sequence belongs to the GTP cyclohydrolase I family. QueF type 1 subfamily.

The protein resides in the cytoplasm. The catalysed reaction is 7-aminomethyl-7-carbaguanine + 2 NADP(+) = 7-cyano-7-deazaguanine + 2 NADPH + 3 H(+). Its pathway is tRNA modification; tRNA-queuosine biosynthesis. Its function is as follows. Catalyzes the NADPH-dependent reduction of 7-cyano-7-deazaguanine (preQ0) to 7-aminomethyl-7-deazaguanine (preQ1). This Chloroherpeton thalassium (strain ATCC 35110 / GB-78) protein is NADPH-dependent 7-cyano-7-deazaguanine reductase.